The following is a 198-amino-acid chain: Probable GTP-binding protein EngB (198 aa).

Residues 22–195 enclose the EngB-type G domain; that stretch reads NIPEVALAGR…LEVIGRWVGL (174 aa). GTP-binding positions include 30–37, 57–61, 75–78, 142–145, and 174–176; these read GRSNVGKS, GRTRL, DLPG, TKAD, and FSA. Residues Ser-37 and Thr-59 each contribute to the Mg(2+) site.

This sequence belongs to the TRAFAC class TrmE-Era-EngA-EngB-Septin-like GTPase superfamily. EngB GTPase family. Mg(2+) serves as cofactor.

In terms of biological role, necessary for normal cell division and for the maintenance of normal septation. The sequence is that of Probable GTP-binding protein EngB from Pelotomaculum thermopropionicum (strain DSM 13744 / JCM 10971 / SI).